Consider the following 98-residue polypeptide: uncharacterized protein (98 aa).

The protein belongs to the CFAP97 family. Expressed in a number of tissues including brain, thymus, lung, heart, liver, spleen, kidney and testis.

This is an uncharacterized protein from Mus musculus (Mouse).